A 589-amino-acid chain; its full sequence is MTVQTKTKGLAWQEKPLSDNERLKTESNFLRGTILDDLKDPLTGGFKGDNFQLIRFHGMYEQDDRDIRAERAEAKLEPLKFMLLRCRLPGGIIKPSQWIELDKFARENSHYRSIRLTNRQTFQFHGVPKAKLQTMHRLLHKLGLDSIATAADMNRNVLCTSNPIESELHRQAYEYAKKISEHLLPRTRGYLDVWVDGKKVQSSDDFLQEDEPILGKTYLPRKFKTAVVIPPLNDVDCYGNDLDFVAISDGNGQLAGFNVLAGGGLSMEHGNTKTYPNISLELGFVPPEHALKAAEAVVTTQRDFGNRSDRKNARTRYTIQNMGLDNFRAEVERRMGMPFEPIRPFKFTGRGDRIGWVKGIDGNWHLTLFIESGRLVDEGGKQLLTGVLEIAKIHKGDFRITANQNLIVANVAEADKAKIEELARTYGLIRNDVSKLRENAMSCVSFPTCPLAMAEAERVLPDFIDELDKIMAKHGTSDDYIVTRITGCPNGCGRAMLAEIGLVGKAVERYNLHIGGDREGVRIPRLYKENITLPEILAELDDLIGKWAAERNIGEGFGDFAIRTGIVKPVLNAPVDFWDVSKAVAIARA.

[4Fe-4S] cluster contacts are provided by Cys-443, Cys-449, Cys-488, and Cys-492. Residue Cys-492 participates in siroheme binding.

Belongs to the nitrite and sulfite reductase 4Fe-4S domain family. In terms of assembly, alpha(8)-beta(8). The alpha component is a flavoprotein, the beta component is a hemoprotein. Siroheme is required as a cofactor. It depends on [4Fe-4S] cluster as a cofactor.

It carries out the reaction hydrogen sulfide + 3 NADP(+) + 3 H2O = sulfite + 3 NADPH + 4 H(+). Its pathway is sulfur metabolism; hydrogen sulfide biosynthesis; hydrogen sulfide from sulfite (NADPH route): step 1/1. Functionally, component of the sulfite reductase complex that catalyzes the 6-electron reduction of sulfite to sulfide. This is one of several activities required for the biosynthesis of L-cysteine from sulfate. The protein is Sulfite reductase [NADPH] hemoprotein beta-component of Neisseria meningitidis serogroup C (strain 053442).